We begin with the raw amino-acid sequence, 178 residues long: Deoxyuridine 5'-triphosphate nucleotidohydrolase (178 aa).

The protein belongs to the dUTPase family. Requires Mg(2+) as cofactor.

The enzyme catalyses dUTP + H2O = dUMP + diphosphate + H(+). It functions in the pathway pyrimidine metabolism; dUMP biosynthesis; dUMP from dCTP (dUTP route): step 2/2. In terms of biological role, this enzyme is involved in nucleotide metabolism: it produces dUMP, the immediate precursor of thymidine nucleotides and it decreases the intracellular concentration of dUTP so that uracil cannot be incorporated into DNA. This is Deoxyuridine 5'-triphosphate nucleotidohydrolase from Fowl adenovirus A serotype 1 (strain CELO / Phelps) (FAdV-1).